The chain runs to 1002 residues: Mannan endo-1,4-beta-mannosidase (1002 aa).

A signal peptide spans 1-28 (MKTTVTKLLATVAAASTIFGMSTLPAFA). The GH26 domain occupies 49–396 (AETRALFDKL…ADSNKNLMAS (348 aa)). Substrate is bound at residue H144. E205 serves as the catalytic Proton donor. 2 residues coordinate substrate: W210 and Y278. The Nucleophile role is filled by E316. K384 provides a ligand contact to substrate. 2 consecutive CBM11 domains span residues 523-703 (VDNV…GKRD) and 717-897 (AKAQ…NEQT). Disordered regions lie at residues 702–722 (RDAY…AQSV) and 888–969 (PAEN…LSRT). Residues 707-719 (PNTNPTPGNTAKA) are compositionally biased toward polar residues. Composition is skewed to basic and acidic residues over residues 897–913 (TPKD…KEQE) and 952–966 (PDTK…KDGL). The LPXTG sorting signal signature appears at 966-970 (LSRTG). T969 carries the pentaglycyl murein peptidoglycan amidated threonine modification. A propeptide spans 970–1002 (GSNIISAIAAVAVLLLGGCAVLIARKRKGGDIE) (removed by sortase).

Belongs to the glycosyl hydrolase 26 family. Homodimer.

It localises to the secreted. It is found in the cell wall. The catalysed reaction is Random hydrolysis of (1-&gt;4)-beta-D-mannosidic linkages in mannans, galactomannans and glucomannans.. Beta-mannanase likely involved in the utilization of carbohydrates in the human gut. Catalyzes the hydrolysis of different beta-1,4-linked mannans, such as ivory nut mannan, konjac glucomannan, as well as carob and guar gum galactomannans, to a mixture of oligosaccharides. The dominant product from ivory nut mannan is found to be mannotriose; mannobiose and mannotetraose are produced to a lesser extent. Does not hydrolyze mannobiose, and hydrolyzes mannotriose at a significantly lower rate than the longer oligosaccharides. The chain is Mannan endo-1,4-beta-mannosidase from Bifidobacterium adolescentis (strain ATCC 15703 / DSM 20083 / NCTC 11814 / E194a).